The chain runs to 1048 residues: Ankyrin repeat domain-containing protein 27 (1048 aa).

A sufficient for GEF activity towards RAB21 region spans residues methionine 1–proline 372. In terms of domain architecture, VPS9 spans alanine 233–threonine 371. 6 ANK repeats span residues threonine 396–alanine 426, arginine 462–alanine 491, histidine 495–valine 524, asparagine 528–arginine 557, lysine 564–valine 593, and leucine 597–proline 627. Positions threonine 396 to aspartate 460 are sufficient for interaction with VPS29. Positions proline 451–threonine 600 are interaction with RAB38. Positions proline 451–isoleucine 729 are interaction with RAB32. Over residues histidine 618–proline 627 the composition is skewed to basic and acidic residues. A disordered region spans residues histidine 618–serine 650. A compositionally biased stretch (low complexity) spans serine 638–serine 650. Residues phenylalanine 658–aspartate 707 form a required for interaction with VAMP7 region. ANK repeat units follow at residues arginine 668–aspartate 698, aspartate 742–alanine 771, serine 775–lysine 804, serine 808–alanine 837, and lysine 841–isoleucine 870. The sufficient for interaction with VPS29 stretch occupies residues threonine 692 to serine 745. Residues glutamate 949 to valine 962 show a composition bias toward basic and acidic residues. Residues glutamate 949–arginine 1019 are disordered. Phosphoserine occurs at positions 961 and 969. Over residues threonine 979–glutamate 995 the composition is skewed to polar residues. The segment covering glutamate 996–valine 1006 has biased composition (basic and acidic residues). The residue at position 1022 (threonine 1022) is a Phosphothreonine.

In terms of assembly, interacts with RAB21 (GDP-bound form), VPS29, KIF5A, KIF5C, GOLGA4. Interacts with RAB32 (GTP-bound form), RAB38 (GTP-bound form), VAMP7. Interacts with low affinity with RAB5. ANKRD27:RAB32 heterodimers can homodimerize to form tetramers. Can interact with RAB38 or RAB32, VPS29 and VAMP7 simultaneously. A decreased interaction with RAB32 seen in the presence of SGSM2.

It localises to the early endosome. The protein resides in the late endosome. The protein localises to the cytoplasmic vesicle membrane. Its subcellular location is the lysosome. It is found in the cell membrane. It localises to the melanosome. The protein resides in the cytoplasmic vesicle. Functionally, may be a guanine exchange factor (GEF) for Rab21, Rab32 and Rab38 and regulate endosome dynamics. May regulate the participation of VAMP7 in membrane fusion events; in vitro inhibits VAMP7-mediated SNARE complex formation by trapping VAMP7 in a closed, fusogenically inactive conformation. Involved in peripheral melanosomal distribution of TYRP1 in melanocytes; the function, which probably is implicating vesicle-trafficking, includes cooperation with Rab32, Rab38 and VAMP7. Involved in the regulation of neurite growth; the function seems to require its GEF activity, probably towards Rab21, and VAMP7 but not Rab32/38. Proposed to be involved in Golgi sorting of VAMP7 and transport of VAMP7 vesicles to the cell surface; the function seems to implicate kinesin heavy chain isoform 5 proteins, GOLGA4, RAB21 and MACF1. Required for the colocalization of VAMP7 and Rab21, probably on TGN sites. Involved in GLUT1 endosome-to-plasma membrane trafficking; the function is dependent of association with VPS29. Regulates the proper trafficking of melanogenic enzymes TYR, TYRP1 and DCT/TYRP2 to melanosomes in melanocytes. This is Ankyrin repeat domain-containing protein 27 (Ankrd27) from Mus musculus (Mouse).